We begin with the raw amino-acid sequence, 372 residues long: Glutamate 5-kinase (372 aa).

Residue lysine 14 participates in ATP binding. Residues serine 54, aspartate 141, and asparagine 153 each contribute to the substrate site. Residues threonine 173–aspartate 174 and threonine 215–lysine 221 contribute to the ATP site. One can recognise a PUA domain in the interval glutamine 280–aspartate 358.

Belongs to the glutamate 5-kinase family.

It localises to the cytoplasm. The enzyme catalyses L-glutamate + ATP = L-glutamyl 5-phosphate + ADP. It functions in the pathway amino-acid biosynthesis; L-proline biosynthesis; L-glutamate 5-semialdehyde from L-glutamate: step 1/2. Catalyzes the transfer of a phosphate group to glutamate to form L-glutamate 5-phosphate. This Shewanella oneidensis (strain ATCC 700550 / JCM 31522 / CIP 106686 / LMG 19005 / NCIMB 14063 / MR-1) protein is Glutamate 5-kinase.